The primary structure comprises 261 residues: 5'-nucleotidase SurE (261 aa).

Positions 8, 9, 43, and 96 each coordinate a divalent metal cation.

The protein belongs to the SurE nucleotidase family. It depends on a divalent metal cation as a cofactor.

The protein localises to the cytoplasm. It carries out the reaction a ribonucleoside 5'-phosphate + H2O = a ribonucleoside + phosphate. Functionally, nucleotidase that shows phosphatase activity on nucleoside 5'-monophosphates. In Cereibacter sphaeroides (strain ATCC 17029 / ATH 2.4.9) (Rhodobacter sphaeroides), this protein is 5'-nucleotidase SurE.